We begin with the raw amino-acid sequence, 255 residues long: Aliphatic sulfonates import ATP-binding protein SsuB (255 aa).

The ABC transporter domain maps to 12 to 233; it reads LLLNAVSKHY…RLGSVRLAEL (222 aa). 44–51 is a binding site for ATP; the sequence is GRSGGGKS.

It belongs to the ABC transporter superfamily. Aliphatic sulfonates importer (TC 3.A.1.17.2) family. In terms of assembly, the complex is composed of two ATP-binding proteins (SsuB), two transmembrane proteins (SsuC) and a solute-binding protein (SsuA).

It localises to the cell inner membrane. It carries out the reaction ATP + H2O + aliphatic sulfonate-[sulfonate-binding protein]Side 1 = ADP + phosphate + aliphatic sulfonateSide 2 + [sulfonate-binding protein]Side 1.. Part of the ABC transporter complex SsuABC involved in aliphatic sulfonates import. Responsible for energy coupling to the transport system. The chain is Aliphatic sulfonates import ATP-binding protein SsuB from Shigella flexneri serotype 5b (strain 8401).